Consider the following 78-residue polypeptide: Conotoxin CaFr179 (78 aa).

Residues 1–19 form the signal peptide; it reads MSGLGIMVLTLLLLVFMEA. A propeptide spanning residues 20-44 is cleaved from the precursor; sequence SHQDAGEKQATQRDAINVRRRRSLA. 3 disulfides stabilise this stretch: Cys-52–Cys-64, Cys-56–Cys-72, and Cys-63–Cys-76. Position 77 is a phenylalanine amide (Phe-77).

This sequence belongs to the conotoxin O3 superfamily. As to expression, expressed by the venom duct.

It is found in the secreted. This chain is Conotoxin CaFr179, found in Conus caracteristicus (Characteristic cone).